The chain runs to 311 residues: Ribosomal RNA small subunit methyltransferase H (311 aa).

S-adenosyl-L-methionine contacts are provided by residues A33 to H35, D53, F80, D101, and Q108.

Belongs to the methyltransferase superfamily. RsmH family.

Its subcellular location is the cytoplasm. It carries out the reaction cytidine(1402) in 16S rRNA + S-adenosyl-L-methionine = N(4)-methylcytidine(1402) in 16S rRNA + S-adenosyl-L-homocysteine + H(+). Specifically methylates the N4 position of cytidine in position 1402 (C1402) of 16S rRNA. The sequence is that of Ribosomal RNA small subunit methyltransferase H from Alkaliphilus oremlandii (strain OhILAs) (Clostridium oremlandii (strain OhILAs)).